We begin with the raw amino-acid sequence, 403 residues long: Chaperone protein DnaJ (403 aa).

One can recognise a J domain in the interval 4-69 (DYYEILGVAR…DKRRRYDQFG (66 aa)). A CR-type zinc finger spans residues 159-240 (GVEKTIKIKK…CYGEGIKQGE (82 aa)). Cysteine 172, cysteine 175, cysteine 188, cysteine 191, cysteine 214, cysteine 217, cysteine 228, and cysteine 231 together coordinate Zn(2+). CXXCXGXG motif repeat units lie at residues 172-179 (CRECNGTG), 188-195 (CPTCHGSG), 214-221 (CPTCGGEG), and 228-235 (CPSCYGEG).

It belongs to the DnaJ family. In terms of assembly, homodimer. It depends on Zn(2+) as a cofactor.

It localises to the cytoplasm. In terms of biological role, participates actively in the response to hyperosmotic and heat shock by preventing the aggregation of stress-denatured proteins and by disaggregating proteins, also in an autonomous, DnaK-independent fashion. Unfolded proteins bind initially to DnaJ; upon interaction with the DnaJ-bound protein, DnaK hydrolyzes its bound ATP, resulting in the formation of a stable complex. GrpE releases ADP from DnaK; ATP binding to DnaK triggers the release of the substrate protein, thus completing the reaction cycle. Several rounds of ATP-dependent interactions between DnaJ, DnaK and GrpE are required for fully efficient folding. Also involved, together with DnaK and GrpE, in the DNA replication of plasmids through activation of initiation proteins. In Chlorobaculum tepidum (strain ATCC 49652 / DSM 12025 / NBRC 103806 / TLS) (Chlorobium tepidum), this protein is Chaperone protein DnaJ.